The sequence spans 320 residues: Olfactory receptor 10J1 (320 aa).

Topologically, residues 1–36 are extracellular; it reads MLLCFRFGNQSMKRENFTLITDFVFQGFSSFHEQQI. N-linked (GlcNAc...) asparagine glycans are attached at residues N9 and N16. A helical transmembrane segment spans residues 37–57; that stretch reads TLFGVFLALYILTLAGNIIIV. The Cytoplasmic portion of the chain corresponds to 58–65; it reads TIIRMDLH. Residues 66-86 form a helical membrane-spanning segment; that stretch reads LHTPMYFFLSMLSTSETVYTL. Topologically, residues 87–110 are extracellular; the sequence is VILPRMLSSLVGMSQPISLAGCAT. A disulfide bridge connects residues C108 and C199. The chain crosses the membrane as a helical span at residues 111–131; the sequence is QMFFFVTFGITNCFLLTAMGY. Residues 132–150 lie on the Cytoplasmic side of the membrane; it reads DRYVAICNPLRYMVIMNKR. The chain crosses the membrane as a helical span at residues 151-171; it reads LRIQLVLGACSIGLIVAITQV. The Extracellular portion of the chain corresponds to 172–207; sequence TSVFRLPFCARKVPHFFCDIRPVMKLSCIDTTVNEI. The chain crosses the membrane as a helical span at residues 208 to 227; sequence LTLIISVLVLVVPMGLVFIS. The Cytoplasmic portion of the chain corresponds to 228–247; that stretch reads YVLIISTILKIASVEGRKKA. A helical membrane pass occupies residues 248–268; that stretch reads FATCASHLTVVIVHYSCASIA. The Extracellular portion of the chain corresponds to 269–281; sequence YLKPKSENTREHD. Residues 282–302 form a helical membrane-spanning segment; sequence QLISVTYTVITPLLNPVVYTL. Residues 303–320 lie on the Cytoplasmic side of the membrane; it reads RNKEVKDALCRAVGGKFS.

It belongs to the G-protein coupled receptor 1 family.

The protein localises to the cell membrane. In terms of biological role, odorant receptor. The sequence is that of Olfactory receptor 10J1 (OR10J1) from Homo sapiens (Human).